We begin with the raw amino-acid sequence, 635 residues long: Threonine--tRNA ligase (635 aa).

In terms of domain architecture, TGS spans 1–61 (MPVIRLPDGS…TDDADLSIIT (61 aa)). The tract at residues 242–533 (DHRKLGRQLD…LIENYAGAMP (292 aa)) is catalytic. C333, H384, and H510 together coordinate Zn(2+).

The protein belongs to the class-II aminoacyl-tRNA synthetase family. Homodimer. It depends on Zn(2+) as a cofactor.

It localises to the cytoplasm. It catalyses the reaction tRNA(Thr) + L-threonine + ATP = L-threonyl-tRNA(Thr) + AMP + diphosphate + H(+). Functionally, catalyzes the attachment of threonine to tRNA(Thr) in a two-step reaction: L-threonine is first activated by ATP to form Thr-AMP and then transferred to the acceptor end of tRNA(Thr). Also edits incorrectly charged L-seryl-tRNA(Thr). The polypeptide is Threonine--tRNA ligase (Methylobacillus flagellatus (strain ATCC 51484 / DSM 6875 / VKM B-1610 / KT)).